The chain runs to 145 residues: Putative type I specificity subunit S.MpnORF289P C-terminus (145 aa).

Belongs to the type-I restriction system S methylase family. As to quaternary structure, the methyltransferase is composed of M and S polypeptides.

The C-terminal section of a specificity (S) subunit of a type I methyltransferase (MTase); this subunit dictates DNA sequence specificity. The single R subunit has multiple frameshifts and is probably not expressed. This Mycoplasma pneumoniae (strain ATCC 29342 / M129 / Subtype 1) (Mycoplasmoides pneumoniae) protein is Putative type I specificity subunit S.MpnORF289P C-terminus.